We begin with the raw amino-acid sequence, 252 residues long: Redox-sensing transcriptional repressor Rex (252 aa).

Positions 26–65 (LYLRALTALSERSVPTVSSEELAAAAGVNSAKLRKDFSYL) form a DNA-binding region, H-T-H motif. 100-105 (GIGNLG) contributes to the NAD(+) binding site. Residues 222–252 (EAAAEGAIPAAASKESADKGPDGDVPAVMPA) are disordered.

Belongs to the transcriptional regulatory Rex family. Homodimer.

It localises to the cytoplasm. Modulates transcription in response to changes in cellular NADH/NAD(+) redox state. The polypeptide is Redox-sensing transcriptional repressor Rex (Streptomyces avermitilis (strain ATCC 31267 / DSM 46492 / JCM 5070 / NBRC 14893 / NCIMB 12804 / NRRL 8165 / MA-4680)).